Here is a 359-residue protein sequence, read N- to C-terminus: Peptide chain release factor 1 (359 aa).

Q238 bears the N5-methylglutamine mark.

It belongs to the prokaryotic/mitochondrial release factor family. Post-translationally, methylated by PrmC. Methylation increases the termination efficiency of RF1.

The protein localises to the cytoplasm. Its function is as follows. Peptide chain release factor 1 directs the termination of translation in response to the peptide chain termination codons UAG and UAA. The sequence is that of Peptide chain release factor 1 from Mycoplasmopsis pulmonis (strain UAB CTIP) (Mycoplasma pulmonis).